The chain runs to 526 residues: Transcription factor kayak (526 aa).

Disordered stretches follow at residues 71–165 (PPLA…GTGG) and 178–221 (RNTN…NKQA). Composition is skewed to low complexity over residues 78 to 87 (NNNNNNNNNG) and 133 to 153 (ISDTSSGATDSTSYQNGHMMG). A compositionally biased stretch (gly residues) spans 154–165 (NSGGGNGGGTGG). The segment covering 178–187 (RNTNTSNSAT) has biased composition (polar residues). The bZIP domain maps to 208-271 (EEKRRIRRER…NQLEYFLQAH (64 aa)). A basic motif region spans residues 210 to 229 (KRRIRRERNKQAAARCRKRR). The leucine-zipper stretch occupies residues 236–264 (LTEEVELLEKRGENLKKEMELLNETKNQL). Over residues 301–322 (GSCGSGSSHHNNNSNSNDSSSG) the composition is skewed to low complexity. Disordered regions lie at residues 301 to 345 (GSCG…DLKP) and 504 to 526 (TSQNKHPLELPTPTTEPSKLVSL). Positions 330-340 (TLNSTGRSNSP) are enriched in polar residues. At S339 the chain carries Phosphoserine.

The protein belongs to the bZIP family. Fos subfamily. In terms of assembly, homodimer. Heterodimer with Jra. The kay-Jra heterodimer binds more stably to the AP-1 site than either of the two proteins alone.

The protein localises to the nucleus. Functionally, developmentally regulated transcription factor AP-1 binds and recognizes the enhancer DNA sequence: 5'-TGA[CG]TCA-3'. May play a role in the function or determination of a particular subset of cells in the developing embryo. It is able to carry out its function either independently of or in conjunction with Jra. In Drosophila persimilis (Fruit fly), this protein is Transcription factor kayak.